A 369-amino-acid polypeptide reads, in one-letter code: Anhydro-N-acetylmuramic acid kinase (369 aa).

12–19 lines the ATP pocket; sequence GTSMDGVD.

This sequence belongs to the anhydro-N-acetylmuramic acid kinase family.

The catalysed reaction is 1,6-anhydro-N-acetyl-beta-muramate + ATP + H2O = N-acetyl-D-muramate 6-phosphate + ADP + H(+). It participates in amino-sugar metabolism; 1,6-anhydro-N-acetylmuramate degradation. It functions in the pathway cell wall biogenesis; peptidoglycan recycling. Its function is as follows. Catalyzes the specific phosphorylation of 1,6-anhydro-N-acetylmuramic acid (anhMurNAc) with the simultaneous cleavage of the 1,6-anhydro ring, generating MurNAc-6-P. Is required for the utilization of anhMurNAc either imported from the medium or derived from its own cell wall murein, and thus plays a role in cell wall recycling. The protein is Anhydro-N-acetylmuramic acid kinase of Shewanella loihica (strain ATCC BAA-1088 / PV-4).